The primary structure comprises 77 residues: MADVLERVTKIIVDRLGVDESQVTLEASFKDDLGADSLDIVELVMELEDEFNMEISDEEAEKIVTVGDAVNYIKSRL.

The Carrier domain occupies 2–77 (ADVLERVTKI…DAVNYIKSRL (76 aa)). The residue at position 37 (S37) is an O-(pantetheine 4'-phosphoryl)serine.

Belongs to the acyl carrier protein (ACP) family. In terms of processing, 4'-phosphopantetheine is transferred from CoA to a specific serine of apo-ACP by AcpS. This modification is essential for activity because fatty acids are bound in thioester linkage to the sulfhydryl of the prosthetic group.

It localises to the cytoplasm. The protein operates within lipid metabolism; fatty acid biosynthesis. Its function is as follows. Carrier of the growing fatty acid chain in fatty acid biosynthesis. In Geobacillus kaustophilus (strain HTA426), this protein is Acyl carrier protein.